The following is a 1269-amino-acid chain: Regulator of nonsense transcripts 2 (1269 aa).

2 disordered regions span residues 1–125 (MPAE…EKEE) and 143–162 (LRSKNQNAPDNRPEENFFSR). The stretch at 57–133 (KKRLEEDKRK…EESLQLHQEA (77 aa)) forms a coiled coil. The tract at residues 94–132 (KKKQEEEERKKQEEQAKRQQEEAAAQLKEKEESLQLHQE) is sufficient for interaction with UPF1. In terms of domain architecture, MIF4G 1 spans 168 to 396 (KKNTAFVKKL…KGELSEDRHK (229 aa)). Disordered stretches follow at residues 422–444 (NMPDLPQDKPTPEEHGPGIDIFT) and 487–518 (KSQNKDSNKDDSKEAKEPKDNKEASSPDDLEL). Basic and acidic residues-rich tracts occupy residues 427–438 (PQDKPTPEEHGP) and 487–511 (KSQNKDSNKDDSKEAKEPKDNKEAS). 2 MIF4G domains span residues 571-755 (QQLP…YCNP) and 774-984 (RKLL…LRPK). The interval 709-926 (GRFLFRSPES…IRLVCTILDT (218 aa)) is sufficient for interaction with UPF3A and UPF3B. Residues 755-1269 (PPPAEKTVRK…LIFKTGGRRR (515 aa)) form a sufficient for interaction with EIF4A1 and EIF1 region. Residues 837–857 (EDVGIHVVDGVLEDIRLGMEV) are binds to UPF3B. Positions 1017 to 1090 (SKDSMTEGEN…KENETDEENA (74 aa)) are disordered. Residues 1025-1073 (ENLEEDEEEEEGGAETEEQSGNESEVNEPEEEEGSEEEEEGEEEEEENT) are compositionally biased toward acidic residues. Positions 1081–1269 (KENETDEENA…LIFKTGGRRR (189 aa)) are sufficient for interaction with UPF1 C-terminus. Thr1085 is modified (phosphothreonine). Interaction with UPF1 regions lie at residues 1102–1126 (VPCVEDEDFIQALDKMMLENLQQRS) and 1164–1204 (DTMP…AEQE). Residues 1102–1195 (VPCVEDEDFI…PMSSQLAANH (94 aa)) form a necessary for interaction with UPF1 region. Residues 1218-1269 (ERQEQEDYQEMLQSLAQRPAPANTNRERRPRYQHPKGAPNADLIFKTGGRRR) form a disordered region.

Found in a post-splicing messenger ribonucleoprotein (mRNP) complex. Associates with the exon junction complex (EJC). Interacts with SMG1, EST1A, UPF3A, UPF3B, EIF4A1 and EIF1. Interacts with UPF1; interaction is promoted by TDRD6. Interacts with DDX4. In terms of tissue distribution, localized in male germ cells.

The protein localises to the cytoplasm. The protein resides in the perinuclear region. Functionally, involved in nonsense-mediated decay (NMD) of mRNAs containing premature stop codons by associating with the nuclear exon junction complex (EJC). Recruited by UPF3B associated with the EJC core at the cytoplasmic side of the nuclear envelope and the subsequent formation of an UPF1-UPF2-UPF3 surveillance complex (including UPF1 bound to release factors at the stalled ribosome) is believed to activate NMD. In cooperation with UPF3B stimulates both ATPase and RNA helicase activities of UPF1. Binds spliced mRNA. The polypeptide is Regulator of nonsense transcripts 2 (Mus musculus (Mouse)).